The following is an 87-amino-acid chain: MVVIRLARGGAKKRPFYQVVVADQRRSRDGRYIENLGFYNPLAKGQEVELRLDMDAYNAWIEKGAQPSDRVKALAKGYKPTTEEATA.

It belongs to the bacterial ribosomal protein bS16 family.

The chain is Small ribosomal subunit protein bS16 from Psychrobacter sp. (strain PRwf-1).